Here is a 230-residue protein sequence, read N- to C-terminus: Ribonuclease 3 (230 aa).

Positions 5–125 constitute an RNase III domain; sequence YSRFYNILGY…VIGAIYLDSD (121 aa). Position 40 (glutamate 40) interacts with Mg(2+). Aspartate 44 is an active-site residue. Positions 111 and 114 each coordinate Mg(2+). Glutamate 114 is an active-site residue. One can recognise a DRBM domain in the interval 153 to 223; that stretch reads DSKSKLQEIL…AEKMIEMLSQ (71 aa).

It belongs to the ribonuclease III family. As to quaternary structure, homodimer. The cofactor is Mg(2+).

Its subcellular location is the cytoplasm. It catalyses the reaction Endonucleolytic cleavage to 5'-phosphomonoester.. Digests double-stranded RNA. Involved in the processing of primary rRNA transcript to yield the immediate precursors to the large and small rRNAs (23S and 16S). Also processes some mRNAs, and tRNAs when they are encoded in the rRNA operon. Its function is as follows. CRISPR (clustered regularly interspaced short palindromic repeat) is an adaptive immune system that provides protection against mobile genetic elements (viruses, transposable elements and conjugative plasmids). CRISPR clusters contain spacers, sequences complementary to antecedent mobile elements, and target invading nucleic acids. CRISPR clusters are transcribed and processed into CRISPR RNA (crRNA). In this organism endogenous ribonuclease 3 and Cas9 are required for correct coprocessing of pre-crRNA and the trans-encoded small RNA (tracrRNA). Cas9, crRNA and tracrRNA are required for cleavage of invading DNA. Complements pre-crRNA and tracrRNA coprocessing defects in an rnc deletion in S.pyogenes strain 370. In Francisella tularensis subsp. novicida (strain U112), this protein is Ribonuclease 3.